The following is a 466-amino-acid chain: Cysteine--tRNA ligase (466 aa).

Zn(2+) is bound at residue Cys28. A 'HIGH' region motif is present at residues 30–40 (PTVYNYIHIGN). Residues Cys208, His233, and Glu237 each contribute to the Zn(2+) site. Positions 265–269 (KMSKS) match the 'KMSKS' region motif. Lys268 is a binding site for ATP.

The protein belongs to the class-I aminoacyl-tRNA synthetase family. In terms of assembly, monomer. Zn(2+) is required as a cofactor.

The protein resides in the cytoplasm. It catalyses the reaction tRNA(Cys) + L-cysteine + ATP = L-cysteinyl-tRNA(Cys) + AMP + diphosphate. The sequence is that of Cysteine--tRNA ligase from Staphylococcus aureus (strain Mu3 / ATCC 700698).